A 164-amino-acid polypeptide reads, in one-letter code: Endoribonuclease YbeY (164 aa).

Residues His111, His115, and His121 each contribute to the Zn(2+) site. The interval 142-164 (GYPDPYADDETETSPTVTTKDSE) is disordered. Positions 154 to 164 (TSPTVTTKDSE) are enriched in polar residues.

This sequence belongs to the endoribonuclease YbeY family. Zn(2+) is required as a cofactor.

It is found in the cytoplasm. Functionally, single strand-specific metallo-endoribonuclease involved in late-stage 70S ribosome quality control and in maturation of the 3' terminus of the 16S rRNA. The polypeptide is Endoribonuclease YbeY (Pseudomonas fluorescens (strain Pf0-1)).